A 259-amino-acid polypeptide reads, in one-letter code: Global transcriptional regulator CodY (259 aa).

The segment at 1–155 is GAF domain; that stretch reads MDLLSKTRRI…GATVVGMEIL (155 aa). Positions 203–222 form a DNA-binding region, H-T-H motif; the sequence is ASKIADRVGITRSVIVNALR.

It belongs to the CodY family.

It localises to the cytoplasm. DNA-binding global transcriptional regulator which is involved in the adaptive response to starvation and acts by directly or indirectly controlling the expression of numerous genes in response to nutrient availability. During rapid exponential growth, CodY is highly active and represses genes whose products allow adaptation to nutrient depletion. The chain is Global transcriptional regulator CodY from Brevibacillus brevis (strain 47 / JCM 6285 / NBRC 100599).